Here is a 298-residue protein sequence, read N- to C-terminus: Fe(II)/2-oxoglutarate-dependent dioxygenase nvfF (298 aa).

3 residues coordinate Fe cation: H137, D139, and H212.

Belongs to the PhyH family. As to quaternary structure, homodimer. Fe cation serves as cofactor.

It catalyses the reaction fumigatonoid C + 2-oxoglutarate + O2 = novofumigatonin + succinate + CO2 + H2O. It functions in the pathway secondary metabolite biosynthesis; terpenoid biosynthesis. Functionally, fe(II)/2-oxoglutarate-dependent dioxygenase; part of the gene cluster that mediates the biosynthesis of novofumigatonin, a heavily oxygenated meroterpenoid containing a unique orthoester moiety. The first step of the pathway is the synthesis of 3,5-dimethylorsellinic acid (DMOA) by the polyketide synthase nvfA via condensation of one acetyl-CoA starter unit with 3 malonyl-CoA units and 2 methylations. DMOA is then converted to farnesyl-DMOA by the farnesyltransferase nvfB. Epoxydation by FAD-dependent monooxygenase nvfK, followed by a protonation-initiated cyclization catalyzed by the terpene cyclase nvfL leads to the production of asnavolin H. The short chain dehydrogenase nvfC then as a 3-OH dehydrogenase of asnovolin H to yield chemesin D. There are two branches to synthesize asnovolin A from chemesin D. In one branch, chemesin D undergoes Baeyer-Villiger oxidation by nvfH, methylation by nvfJ, and enoyl reduction by the nvfM D enoylreductase that reduces the double bond between C-5'and C-6', to form respectively asnovolin I, asnovolin K, and asnovolin A. In the other branch, the methylation precedes the Baeyer-Villiger oxidation and the enoyl reduction to yield asnovolin A via the asnovolin J intermediate. Asnovolin A is further converted to fumigatonoid A by the Fe(II)/2-oxoglutarate-dependent dioxygenase nvfI that catalyzes an endoperoxidation reaction. The alpha/beta hydrolase nvfD then acts as an epimerase that converts fumigatonoid A to its C-5' epimer, which then undergoes spontaneous or nvfD-catalyzed lactonization. The following step utilizes the ketoreductase nvfG to produce fumigatonoid B. The dioxygenase nvfE further converts fumigatonoid B into fumigatonoid C. Finally the Fe(II)/2-oxoglutarate-dependent dioxygenase nvfF catalyzes two rounds of oxidation to transform fumigatonoid C into the end product, novofumigatonin A. The sequence is that of Fe(II)/2-oxoglutarate-dependent dioxygenase nvfF from Aspergillus novofumigatus (strain IBT 16806).